Reading from the N-terminus, the 453-residue chain is Bifunctional protein GlmU (453 aa).

The interval 1 to 231 is pyrophosphorylase; the sequence is MERTCLAVIL…EIEMTGCNTR (231 aa). UDP-N-acetyl-alpha-D-glucosamine-binding positions include 10-13, lysine 24, glutamine 77, 82-83, 105-107, glycine 143, glutamate 157, asparagine 172, and asparagine 229; these read LAAG, GT, and YGD. Aspartate 107 contributes to the Mg(2+) binding site. Asparagine 229 contacts Mg(2+). Residues 232-252 form a linker region; sequence AELAVIERFWQERRRHQMMLS. Residues 253-453 are N-acetyltransferase; that stretch reads GVTMIAPETV…AIKAAKKAKA (201 aa). UDP-N-acetyl-alpha-D-glucosamine contacts are provided by arginine 318 and lysine 336. Catalysis depends on histidine 348, which acts as the Proton acceptor. Residues tyrosine 351 and asparagine 362 each coordinate UDP-N-acetyl-alpha-D-glucosamine. Acetyl-CoA contacts are provided by residues alanine 365, 371–372, serine 390, serine 408, and arginine 425; that span reads NY.

In the N-terminal section; belongs to the N-acetylglucosamine-1-phosphate uridyltransferase family. It in the C-terminal section; belongs to the transferase hexapeptide repeat family. Homotrimer. The cofactor is Mg(2+).

The protein resides in the cytoplasm. The enzyme catalyses alpha-D-glucosamine 1-phosphate + acetyl-CoA = N-acetyl-alpha-D-glucosamine 1-phosphate + CoA + H(+). The catalysed reaction is N-acetyl-alpha-D-glucosamine 1-phosphate + UTP + H(+) = UDP-N-acetyl-alpha-D-glucosamine + diphosphate. Its pathway is nucleotide-sugar biosynthesis; UDP-N-acetyl-alpha-D-glucosamine biosynthesis; N-acetyl-alpha-D-glucosamine 1-phosphate from alpha-D-glucosamine 6-phosphate (route II): step 2/2. It functions in the pathway nucleotide-sugar biosynthesis; UDP-N-acetyl-alpha-D-glucosamine biosynthesis; UDP-N-acetyl-alpha-D-glucosamine from N-acetyl-alpha-D-glucosamine 1-phosphate: step 1/1. The protein operates within bacterial outer membrane biogenesis; LPS lipid A biosynthesis. Functionally, catalyzes the last two sequential reactions in the de novo biosynthetic pathway for UDP-N-acetylglucosamine (UDP-GlcNAc). The C-terminal domain catalyzes the transfer of acetyl group from acetyl coenzyme A to glucosamine-1-phosphate (GlcN-1-P) to produce N-acetylglucosamine-1-phosphate (GlcNAc-1-P), which is converted into UDP-GlcNAc by the transfer of uridine 5-monophosphate (from uridine 5-triphosphate), a reaction catalyzed by the N-terminal domain. The protein is Bifunctional protein GlmU of Rhizobium johnstonii (strain DSM 114642 / LMG 32736 / 3841) (Rhizobium leguminosarum bv. viciae).